The sequence spans 115 residues: NADH-ubiquinone oxidoreductase chain 3 (115 aa).

3 helical membrane-spanning segments follow: residues 3 to 23, 55 to 75, and 86 to 106; these read LALALMINTLLALLLMTITFW, FFLVAITFLLFDLEIALLLPL, and LTIASSLTLITILILSLAYEW.

It belongs to the complex I subunit 3 family. In terms of assembly, core subunit of respiratory chain NADH dehydrogenase (Complex I) which is composed of 45 different subunits. Interacts with TMEM186. Interacts with TMEM242.

Its subcellular location is the mitochondrion inner membrane. The enzyme catalyses a ubiquinone + NADH + 5 H(+)(in) = a ubiquinol + NAD(+) + 4 H(+)(out). Functionally, core subunit of the mitochondrial membrane respiratory chain NADH dehydrogenase (Complex I) which catalyzes electron transfer from NADH through the respiratory chain, using ubiquinone as an electron acceptor. Essential for the catalytic activity of complex I. This Hylobates lar (Lar gibbon) protein is NADH-ubiquinone oxidoreductase chain 3.